We begin with the raw amino-acid sequence, 959 residues long: MTVTTPFVNGTSYCTVTAYSVQSYKAAIDFYTKFLSLENRSSPDENSTLLSNDSISLKILLRPDEKINKNVEAHLKELNSITKTQDWRSHATQSLVFNTSDILAVKDTLNAMNAPLQGYPTELFPMQLYTLDPLGNVVGVTSTKNAVSTKPTPPPAPEASAESGLSSKVHSYTDLAYRMKTTDTYPSLPKPLNRPQKAIAVMTSGGDAPGMNSNVRAIVRSAIFKGCRAFVVMEGYEGLVRGGPEYIKEFHWEDVRGWSAEGGTNIGTARCMEFKKREGRLLGAQHLIEAGVDALIVCGGDGSLTGADLFRSEWPSLIEELLKTNRISNEQYERMKHLNICGTVGSIDNDMSTTDATIGAYSALDRICKAIDYVEATANSHSRAFVVEVMGRNCGWLALLAGIATSADYIFIPEKPATSSEWQDQMCDIVSKHRSRGKRTTIVVVAEGAIAADLTPISPSDVHKVLVDRLGLDTRITTLGHVQRGGTAVAYDRILATLQGLEAVNAVLESTPDTPSPLIAVNENKIVRKPLMESVKLTKAVAEAIQAKDFKRAMSLRDTEFIEHLNNFMAINSADHNEPKLPKDKRLKIAIVNVGAPAGGINSAVYSMATYCMSQGHRPYAIYNGWSGLARHESVRSLNWKDMLGWQSRGGSEIGTNRVTPEEADLGMIAYYFQKYEFDGLIIVGGFEAFESLHQLERARESYPAFRIPMVLIPATLSNNVPGTEYSLGSDTALNALMEYCDVVKQSASSTRGRAFVVDCQGGNSGYLATYASLAVGAQVSYVPEEGISLEQLSEDIEYLAQSFEKAEGRGRFGKLILKSTNASKALSATKLAEVITAEADGRFDAKPAYPGHVQQGGLPSPIDRTRATRMAIKAVGFIKDNQAAIAEARAAEENFNADDKTISDTAAVVGVKGSHVVYNSIRQLYDYETEVSMRMPKVIHWQATRLIADHLVGRKRVD.

The interval 2–573 (TVTTPFVNGT…HLNNFMAINS (572 aa)) is N-terminal catalytic PFK domain 1. Residues 144 to 167 (KNAVSTKPTPPPAPEASAESGLSS) are disordered. At Thr152 the chain carries Phosphothreonine. Residues 158–167 (EASAESGLSS) show a composition bias toward low complexity. Phosphoserine occurs at positions 163 and 171. Residues Gly206, 270-271 (RC), and 300-303 (GDGS) each bind ATP. Asp301 serves as a coordination point for Mg(2+). Beta-D-fructose 6-phosphate-binding positions include 346-348 (SID), Arg383, 390-392 (MGR), Glu447, Arg475, and 481-484 (HVQR). Asp348 serves as the catalytic Proton acceptor. The interval 574–587 (ADHNEPKLPKDKRL) is interdomain linker. Residues 588–959 (KIAIVNVGAP…DHLVGRKRVD (372 aa)) form a C-terminal regulatory PFK domain 2 region. Residues Arg658, 716–720 (TLSNN), Arg754, and 761–763 (QGG) each bind beta-D-fructose 2,6-bisphosphate. Residue Ser803 is modified to Phosphoserine. Residues Lys847, 853–856 (HVQQ), and Arg935 contribute to the beta-D-fructose 2,6-bisphosphate site.

This sequence belongs to the phosphofructokinase type A (PFKA) family. ATP-dependent PFK group I subfamily. Eukaryotic two domain clade 'E' sub-subfamily. In terms of assembly, heterooctamer of 4 alpha and 4 beta chains. Mg(2+) serves as cofactor.

The protein localises to the cytoplasm. It is found in the mitochondrion outer membrane. It carries out the reaction beta-D-fructose 6-phosphate + ATP = beta-D-fructose 1,6-bisphosphate + ADP + H(+). It functions in the pathway carbohydrate degradation; glycolysis; D-glyceraldehyde 3-phosphate and glycerone phosphate from D-glucose: step 3/4. Its activity is regulated as follows. Allosterically activated by ADP, AMP, or fructose 2,6-bisphosphate, and allosterically inhibited by ATP or citrate. In terms of biological role, catalyzes the phosphorylation of D-fructose 6-phosphate to fructose 1,6-bisphosphate by ATP, the first committing step of glycolysis. The sequence is that of ATP-dependent 6-phosphofructokinase subunit beta (PFK2) from Saccharomyces cerevisiae (strain ATCC 204508 / S288c) (Baker's yeast).